The sequence spans 490 residues: Cytochrome P450 2W1 (490 aa).

An N-terminal signal peptide occupies residues 1–22 (MALLLLLFLGLLGLWGLLCACA). N-linked (GlcNAc...) asparagine glycosylation is present at asparagine 177. Cysteine 433 provides a ligand contact to heme.

Belongs to the cytochrome P450 family. Requires heme as cofactor. In terms of tissue distribution, very low levels are detected in fetal and adult tissues. Highly expressed in several tumor samples, in particular colon and adrenal tumors.

It localises to the endoplasmic reticulum lumen. The protein resides in the cell membrane. It is found in the microsome membrane. It catalyses the reaction all-trans-retinoate + reduced [NADPH--hemoprotein reductase] + O2 = all-trans-4-hydroxyretinoate + oxidized [NADPH--hemoprotein reductase] + H2O + H(+). It carries out the reaction 1-(9Z-octadecenoyl)-sn-glycero-3-phosphocholine + reduced [NADPH--hemoprotein reductase] + O2 = 1-[8-hydroxy-(9Z)-octadecenoyl]-sn-glycero-3-phosphocholine + oxidized [NADPH--hemoprotein reductase] + H2O + H(+). The enzyme catalyses 1-(9Z-octadecenoyl)-sn-glycero-3-phosphocholine + reduced [NADPH--hemoprotein reductase] + O2 = 1-[11-hydroxy-(9Z)-octadecenoyl]-sn-glycero-3-phosphocholine + oxidized [NADPH--hemoprotein reductase] + H2O + H(+). The catalysed reaction is 1-(9Z-octadecenoyl)-sn-glycero-3-phosphocholine + reduced [NADPH--hemoprotein reductase] + O2 = 1-[(9S,10R)-epoxy-octadecanoyl]-sn-glycero-3-phosphocholine + oxidized [NADPH--hemoprotein reductase] + H2O + H(+). It catalyses the reaction 1-(9Z-octadecenoyl)-sn-glycero-3-phosphocholine + reduced [NADPH--hemoprotein reductase] + O2 = 1-[(9R,10S)-epoxy-octadecanoyl]-sn-glycero-3-phosphocholine + oxidized [NADPH--hemoprotein reductase] + H2O + H(+). A cytochrome P450 monooxygenase that may play a role in retinoid and phospholipid metabolism. Catalyzes the hydroxylation of saturated carbon hydrogen bonds. Hydroxylates all trans-retinoic acid (atRA) to 4-hydroxyretinoate and may regulate atRA clearance. Other retinoids such as all-trans retinol and all-trans retinal are potential endogenous substrates. Catalyzes both epoxidation of double bonds and hydroxylation of carbon hydrogen bonds of the fatty acyl chain of 1-acylphospholipids/2-lysophospholipids. Can metabolize various lysophospholipids classes including lysophosphatidylcholines (LPCs), lysophosphatidylinositols (LPIs), lysophosphatidylserines (LPSs), lysophosphatidylglycerols (LPGs), lysophosphatidylethanolamines (LPEs) and lysophosphatidic acids (LPAs). Has low or no activity toward 2-acylphospholipids/1-lysophospholipids, diacylphospholipids and free fatty acids. May play a role in tumorigenesis by activating procarcinogens such as aflatoxin B1, polycyclic aromatic hydrocarbon dihydrodiols and aromatic amines. Mechanistically, uses molecular oxygen inserting one oxygen atom into a substrate, and reducing the second into a water molecule, with two electrons provided by NADPH via cytochrome P450 reductase (CPR; NADPH-ferrihemoprotein reductase). This chain is Cytochrome P450 2W1, found in Homo sapiens (Human).